We begin with the raw amino-acid sequence, 72 residues long: Translation initiation factor IF-1 (72 aa).

Positions 1–72 (MAKEDNIEMQ…SKGRIVFRSR (72 aa)) constitute an S1-like domain.

It belongs to the IF-1 family. Component of the 30S ribosomal translation pre-initiation complex which assembles on the 30S ribosome in the order IF-2 and IF-3, IF-1 and N-formylmethionyl-tRNA(fMet); mRNA recruitment can occur at any time during PIC assembly.

The protein resides in the cytoplasm. In terms of biological role, one of the essential components for the initiation of protein synthesis. Stabilizes the binding of IF-2 and IF-3 on the 30S subunit to which N-formylmethionyl-tRNA(fMet) subsequently binds. Helps modulate mRNA selection, yielding the 30S pre-initiation complex (PIC). Upon addition of the 50S ribosomal subunit IF-1, IF-2 and IF-3 are released leaving the mature 70S translation initiation complex. The protein is Translation initiation factor IF-1 of Shewanella pealeana (strain ATCC 700345 / ANG-SQ1).